The sequence spans 333 residues: uncharacterized protein (333 aa).

It belongs to the polysaccharide synthase family.

This is an uncharacterized protein from Methanocaldococcus jannaschii (strain ATCC 43067 / DSM 2661 / JAL-1 / JCM 10045 / NBRC 100440) (Methanococcus jannaschii).